Reading from the N-terminus, the 434-residue chain is UDP-N-acetylmuramoylalanine--D-glutamate ligase (434 aa).

117–123 (GTNGKST) contributes to the ATP binding site.

It belongs to the MurCDEF family.

It localises to the cytoplasm. It catalyses the reaction UDP-N-acetyl-alpha-D-muramoyl-L-alanine + D-glutamate + ATP = UDP-N-acetyl-alpha-D-muramoyl-L-alanyl-D-glutamate + ADP + phosphate + H(+). Its pathway is cell wall biogenesis; peptidoglycan biosynthesis. In terms of biological role, cell wall formation. Catalyzes the addition of glutamate to the nucleotide precursor UDP-N-acetylmuramoyl-L-alanine (UMA). This Sphingopyxis alaskensis (strain DSM 13593 / LMG 18877 / RB2256) (Sphingomonas alaskensis) protein is UDP-N-acetylmuramoylalanine--D-glutamate ligase.